The sequence spans 315 residues: tRNA dimethylallyltransferase (315 aa).

Residue 10–17 coordinates ATP; it reads GPTAVGKT. 12 to 17 serves as a coordination point for substrate; the sequence is TAVGKT. Positions 35–38 are interaction with substrate tRNA; the sequence is DSMQ.

This sequence belongs to the IPP transferase family. As to quaternary structure, monomer. Mg(2+) is required as a cofactor.

It catalyses the reaction adenosine(37) in tRNA + dimethylallyl diphosphate = N(6)-dimethylallyladenosine(37) in tRNA + diphosphate. Catalyzes the transfer of a dimethylallyl group onto the adenine at position 37 in tRNAs that read codons beginning with uridine, leading to the formation of N6-(dimethylallyl)adenosine (i(6)A). The sequence is that of tRNA dimethylallyltransferase from Geobacillus kaustophilus (strain HTA426).